A 1383-amino-acid polypeptide reads, in one-letter code: Periaxin (1383 aa).

A Phosphoserine modification is found at serine 7. The PDZ domain occupies 16-99; it reads LVEIIVETEA…YKVSFCLKRT (84 aa). A Nuclear export signal motif is present at residues 70–84; that stretch reads VFFENFKYEDALRLL. 2 positions are modified to phosphoserine: serine 133 and serine 243. 46 consecutive repeat copies span residues 432–436, 440–444, 448–452, 456–460, 461–465, 466–470, 474–478, 482–486, 487–491, 492–496, 497–501, 502–506, 507–511, 515–519, 523–527, 531–535, 536–540, 544–548, 549–553, 554–558, 562–566, 567–571, 575–579, 580–584, 585–589, 593–597, 601–605, 606–610, 611–615, 619–623, 627–631, 632–636, 637–641, 645–649, 653–657, 658–662, 663–667, 671–675, 676–680, 684–688, 689–693, 694–698, 699–703, 705–709, 713–717, and 718–722. The interval 432 to 722 is 46 X 5 AA approximate tandem repeats of [LVMGIE]-[PSM]-[EDKA]-[LIVMA]-[AQKHPRT]; that may have a tripeptide spacer of [ALKD]-[IPV]-[KPH]; sequence GPEVKAPKGP…VPEMKLPKVP (291 aa). Phosphoserine occurs at positions 838, 971, 1020, 1271, 1275, 1277, 1285, 1323, and 1329. Residues 1251–1383 form a disordered region; it reads KVKSPKLRLP…RIEGTQAAAI (133 aa). Residues 1267–1277 show a composition bias toward low complexity; sequence SESASGEGSPS. A compositionally biased stretch (basic and acidic residues) spans 1346–1355; sequence GSKDREEGGF. Phosphoserine is present on serine 1361.

This sequence belongs to the periaxin family. As to quaternary structure, homodimer (via PDZ domain). Interacts with SCN10A. Found in a complex with SCN10A. Interacts with DRP2. Identified in a dystroglycan complex that contains at least PRX, DRP2, UTRN, DMD and DAG1. Detected in a complex composed of at least EZR, AHNAK, PPL and PRX. Identified in a complex with EZR, AHNAK, BFSP1, BFSP2, ANK2, PLEC, VIM and spectrin. Post-translationally, the N-terminus is blocked. In terms of tissue distribution, detected in sciatic nerve and in trigeminal nerve Schwann cells. Detected in myelinating Schwann cells in sciatic nerve (at protein level).

The protein localises to the nucleus. The protein resides in the cytoplasm. It is found in the cell membrane. Its subcellular location is the cell junction. Functionally, scaffolding protein that functions as part of a dystroglycan complex in Schwann cells, and as part of EZR and AHNAK-containing complexes in eye lens fiber cells. Required for the maintenance of the peripheral myelin sheath that is essential for normal transmission of nerve impulses and normal perception of sensory stimuli. Required for normal transport of MBP mRNA from the perinuclear to the paranodal regions. Required for normal remyelination after nerve injury. Required for normal elongation of Schwann cells and normal length of the internodes between the nodes of Ranvier. The demyelinated nodes of Ranvier permit saltatory transmission of nerve impulses; shorter internodes cause slower transmission of nerve impulses. Required for the formation of appositions between the abaxonal surface of the myelin sheath and the Schwann cell plasma membrane; the Schwann cell cytoplasm is restricted to regions between these appositions. Required for the formation of Cajal bands and of Schmidt-Lanterman incisures that correspond to short, cytoplasm-filled regions on myelinated nerves. Recruits DRP2 to the Schwann cell plasma membrane. Required for normal protein composition of the eye lens fiber cell plasma membrane and normal eye lens fiber cell morphology. The protein is Periaxin (Prx) of Rattus norvegicus (Rat).